The sequence spans 244 residues: Phosphoadenosine 5'-phosphosulfate reductase (244 aa).

Cys239 serves as the catalytic Nucleophile; cysteine thiosulfonate intermediate.

The protein belongs to the PAPS reductase family. CysH subfamily.

The protein resides in the cytoplasm. The enzyme catalyses [thioredoxin]-disulfide + sulfite + adenosine 3',5'-bisphosphate + 2 H(+) = [thioredoxin]-dithiol + 3'-phosphoadenylyl sulfate. It functions in the pathway sulfur metabolism; hydrogen sulfide biosynthesis; sulfite from sulfate: step 3/3. Functionally, catalyzes the formation of sulfite from phosphoadenosine 5'-phosphosulfate (PAPS) using thioredoxin as an electron donor. The chain is Phosphoadenosine 5'-phosphosulfate reductase from Pectobacterium atrosepticum (strain SCRI 1043 / ATCC BAA-672) (Erwinia carotovora subsp. atroseptica).